Reading from the N-terminus, the 187-residue chain is Elongation factor P (187 aa).

This sequence belongs to the elongation factor P family.

Its subcellular location is the cytoplasm. Its pathway is protein biosynthesis; polypeptide chain elongation. Involved in peptide bond synthesis. Stimulates efficient translation and peptide-bond synthesis on native or reconstituted 70S ribosomes in vitro. Probably functions indirectly by altering the affinity of the ribosome for aminoacyl-tRNA, thus increasing their reactivity as acceptors for peptidyl transferase. The sequence is that of Elongation factor P from Brachyspira hyodysenteriae (strain ATCC 49526 / WA1).